The chain runs to 660 residues: Glycine betaine transporter (660 aa).

Residues 1-13 (MPSKTSSRFANIN) are Cytoplasmic-facing. Residues 14 to 34 (PNVFVSTIMIIAIFLAIVILA) form a helical membrane-spanning segment. Over 35–52 (PDAFELLTQQLKNWITES) the chain is Periplasmic. Residues 53–73 (FSWFYVLSVAFFLIVLGYIAC) traverse the membrane as a helical segment. The Cytoplasmic segment spans residues 74-93 (SSSGKIKLGPDHSQPDYSNS). A helical transmembrane segment spans residues 94–114 (SWFAMLFTAGMGIGLMFFGIA). At 115-139 (EPIMHYVSPPSGEPETILAAQQSMR) the chain is on the periplasmic side. The helical transmembrane segment at 140–160 (VTFFHWGLHAWGIYAIVALSL) threads the bilayer. Residues 161–195 (SYFAYRHDLPLKIRSSLYPLIGKKIYGPMGDAVDT) are Cytoplasmic-facing. The chain crosses the membrane as a helical span at residues 196-216 (FATIGTIFGVATTLGFGVTQI). Residues 217 to 230 (SSGLNYLFGFEPTS) lie on the Periplasmic side of the membrane. A helical transmembrane segment spans residues 231–251 (FSKVVLIIIVSAMAALSVGLG). Residues 252 to 263 (LDKGVKRLAELN) lie on the Cytoplasmic side of the membrane. Residues 264 to 284 (LVLAVTLLAFVFFTSATVYLL) traverse the membrane as a helical segment. Residues 285-316 (QTTIQNTGQYISNLFEMTFNLYAYQPNGWIGG) are Periplasmic-facing. A helical transmembrane segment spans residues 317 to 337 (WTIMYWAWWISWSPFVGMFIA). Residues 338-347 (RVSRGRTIRE) lie on the Cytoplasmic side of the membrane. Residues 348-368 (FIIGVMLIPTGFTLIWMGFMG) form a helical membrane-spanning segment. Residues 369–401 (NAGLYSILHDGNLSLLNAVQRDSSVALFEFLHS) lie on the Periplasmic side of the membrane. A helical membrane pass occupies residues 402 to 422 (LPFSGVMSLLATVLVVLFFVT). The Cytoplasmic portion of the chain corresponds to 423–446 (SADSGALVVDYLTAKSEDSPVWQR). A helical membrane pass occupies residues 447–467 (LFWIVVMAGLAIILLLAGGLT). The Periplasmic portion of the chain corresponds to 468–471 (ALQS). A helical transmembrane segment spans residues 472-492 (ATIMSALPFTFIMLLICWGLI). Residues 493–660 (KALRIDSTKM…LSVMRAQTGN (168 aa)) lie on the Cytoplasmic side of the membrane.

The protein belongs to the BCCT transporter (TC 2.A.15) family.

The protein resides in the cell inner membrane. Its activity is regulated as follows. Uptake is activated by NaCl, KCl or mannose gradients across the cell membrane. Inhibited by the protonophore 3,3',4',5-tetrachlorosalicylanilide (TCS). In terms of biological role, energy-dependent uptake of glycine betaine in response to high salinity. The sequence is that of Glycine betaine transporter from Acinetobacter baylyi (strain ATCC 33305 / BD413 / ADP1).